Consider the following 437-residue polypeptide: Adenylosuccinate synthetase (437 aa).

Residues 25–31 (GDEGKGK), 53–55 (GHT), and lysine 62 contribute to the GTP site. The active-site Proton acceptor is aspartate 26. 2 residues coordinate Mg(2+): aspartate 26 and glycine 53. IMP-binding positions include 26 to 29 (DEGK) and 51 to 54 (NAGH). Residue histidine 54 is the Proton donor of the active site. Residues threonine 141, arginine 155, asparagine 232, and threonine 247 each coordinate IMP. GTP is bound at residue threonine 307. A substrate-binding site is contributed by 307 to 313 (TTTKRPR). Arginine 311 lines the IMP pocket. Residues arginine 313, 339-341 (KLD), and 425-427 (GVG) each bind GTP.

The protein belongs to the adenylosuccinate synthetase family. Homodimer. Mg(2+) is required as a cofactor.

It is found in the cytoplasm. It carries out the reaction IMP + L-aspartate + GTP = N(6)-(1,2-dicarboxyethyl)-AMP + GDP + phosphate + 2 H(+). It functions in the pathway purine metabolism; AMP biosynthesis via de novo pathway; AMP from IMP: step 1/2. In terms of biological role, plays an important role in the salvage pathway for purine nucleotide biosynthesis. Catalyzes the first committed step in the biosynthesis of AMP from IMP. This chain is Adenylosuccinate synthetase, found in Plasmodium knowlesi (strain H).